The sequence spans 691 residues: Tumor necrosis factor alpha-induced protein 2 (691 aa).

The segment at 9–111 is disordered; sequence QGFPGQQSVP…KPRPELDGPL (103 aa). Residues 12–31 show a composition bias toward polar residues; it reads PGQQSVPGTLNFAVSPQKPR. The segment covering 33–45 has biased composition (low complexity); sequence TSEAESETSMSEA. Residues 91–107 show a composition bias toward basic and acidic residues; the sequence is QPRLSDLEVQPKPRPEL.

This sequence belongs to the SEC6 family.

May play a role as a mediator of inflammation and angiogenesis. The sequence is that of Tumor necrosis factor alpha-induced protein 2 (Tnfaip2) from Mus musculus (Mouse).